The sequence spans 289 residues: tRNA acetyltransferase TAN1 (289 aa).

Positions 1 to 10 (MGEKRNRNGK) are enriched in basic and acidic residues. Disordered regions lie at residues 1 to 31 (MGEK…DPGT) and 64 to 83 (DIKE…LSIE). At Ser72 the chain carries Phosphoserine. In terms of domain architecture, THUMP spans 146 to 259 (ADPKNMVKRT…KSNIGMCVVD (114 aa)).

The protein localises to the cytoplasm. Its subcellular location is the nucleus. Functionally, probable tRNA acetyltransferase required for the formation of the modified nucleoside N(4)-acetylcytidine in serine and leucine tRNAs. Binds RNA. This Saccharomyces cerevisiae (strain ATCC 204508 / S288c) (Baker's yeast) protein is tRNA acetyltransferase TAN1 (TAN1).